The primary structure comprises 307 residues: tRNA pseudouridine synthase B (307 aa).

Asp38 acts as the Nucleophile in catalysis.

Belongs to the pseudouridine synthase TruB family. Type 1 subfamily.

It catalyses the reaction uridine(55) in tRNA = pseudouridine(55) in tRNA. Functionally, responsible for synthesis of pseudouridine from uracil-55 in the psi GC loop of transfer RNAs. This Bacillus cereus (strain ATCC 10987 / NRS 248) protein is tRNA pseudouridine synthase B.